A 78-amino-acid polypeptide reads, in one-letter code: MAGRKGGRAKRRKVCYFTANGITHIDYKDVDLLKKFISERGKILPRRVTGTSAKYQRKLTVAIKRARQMALLPYVADE.

Belongs to the bacterial ribosomal protein bS18 family. In terms of assembly, part of the 30S ribosomal subunit. Forms a tight heterodimer with protein bS6.

Functionally, binds as a heterodimer with protein bS6 to the central domain of the 16S rRNA, where it helps stabilize the platform of the 30S subunit. In Geobacillus sp. (strain WCH70), this protein is Small ribosomal subunit protein bS18.